We begin with the raw amino-acid sequence, 250 residues long: Small ribosomal subunit protein uS2 (250 aa).

This sequence belongs to the universal ribosomal protein uS2 family.

In Paraburkholderia phytofirmans (strain DSM 17436 / LMG 22146 / PsJN) (Burkholderia phytofirmans), this protein is Small ribosomal subunit protein uS2.